The following is a 175-amino-acid chain: Large ribosomal subunit protein uL10 (175 aa).

The protein belongs to the universal ribosomal protein uL10 family. As to quaternary structure, part of the ribosomal stalk of the 50S ribosomal subunit. The N-terminus interacts with L11 and the large rRNA to form the base of the stalk. The C-terminus forms an elongated spine to which L12 dimers bind in a sequential fashion forming a multimeric L10(L12)X complex.

Forms part of the ribosomal stalk, playing a central role in the interaction of the ribosome with GTP-bound translation factors. In Methylobacterium sp. (strain 4-46), this protein is Large ribosomal subunit protein uL10.